Here is a 400-residue protein sequence, read N- to C-terminus: U-box domain-containing protein 37 (400 aa).

Residues Lys-229–Leu-298 adopt a coiled-coil conformation. Residues Glu-324–Phe-398 enclose the U-box domain.

It catalyses the reaction S-ubiquitinyl-[E2 ubiquitin-conjugating enzyme]-L-cysteine + [acceptor protein]-L-lysine = [E2 ubiquitin-conjugating enzyme]-L-cysteine + N(6)-ubiquitinyl-[acceptor protein]-L-lysine.. It functions in the pathway protein modification; protein ubiquitination. Functionally, functions as an E3 ubiquitin ligase. In Arabidopsis thaliana (Mouse-ear cress), this protein is U-box domain-containing protein 37 (PUB37).